The chain runs to 1274 residues: Myosin-binding protein C, cardiac-type (1274 aa).

Position 1 is an N-acetylmethionine (M1). The residue at position 47 (S47) is a Phosphoserine. Over residues 107 to 141 the composition is skewed to low complexity; it reads APAPAEATGAPGEAPAPAAELGESAPSPKGSSSAA. The disordered stretch occupies residues 107–153; that stretch reads APAPAEATGAPGEAPAPAAELGESAPSPKGSSSAALNGPTPGAPDDP. Residues 153-256 form the Ig-like C2-type 1 domain; the sequence is PIGLFVMRPQ…FDCSNFNLTV (104 aa). 4 residues coordinate Zn(2+): Q208, H210, E223, and H225. S275, S284, and S304 each carry phosphoserine; by PKA and PKC. Phosphoserine is present on residues S311 and S427. Ig-like C2-type domains are found at residues 362–452, 453–543, 544–633, and 645–771; these read STAF…VKEP, PVLI…VQEK, KLEV…HFME, and PKIH…VIDV. An intrachain disulfide couples C436 to C443. Position 550 is a phosphoserine (S550). Phosphothreonine is present on T607. Fibronectin type-III domains lie at 774-870 and 872-967; these read APAA…IGPP and EPTH…VQEI. The Ig-like C2-type 6 domain maps to 971–1065; the sequence is PRLQLPRHLR…ATLVLQVVDK (95 aa). Residues 1068–1163 enclose the Fibronectin type-III 3 domain; the sequence is PPQDLRVTDA…TKEPVFIPRP (96 aa). An Ig-like C2-type 7 domain is found at 1181–1274; that stretch reads PSFTQPLVNR…ECRLEVRVPQ (94 aa). R1241 bears the Omega-N-methylarginine mark.

Belongs to the immunoglobulin superfamily. MyBP family. Substrate for phosphorylation by PKA and PKC. Reversible phosphorylation appears to modulate contraction. Post-translationally, polyubiquitinated.

Functionally, thick filament-associated protein located in the crossbridge region of vertebrate striated muscle a bands. In vitro it binds MHC, F-actin and native thin filaments, and modifies the activity of actin-activated myosin ATPase. It may modulate muscle contraction or may play a more structural role. The protein is Myosin-binding protein C, cardiac-type (MYBPC3) of Homo sapiens (Human).